Reading from the N-terminus, the 201-residue chain is Charged multivesicular body protein 6 (201 aa).

G2 carries N-myristoyl glycine lipidation. The stretch at 10-145 forms a coiled coil; the sequence is QSRVTEQDKA…YQRQIDELLA (136 aa). S119 is modified (phosphoserine). Position 130 is a phosphothreonine (T130). The short motif at 168-179 is the Type-2 MIT-interacting motif element; the sequence is IELPEVPSEPLP. Positions 171–201 are disordered; that stretch reads PEVPSEPLPEKIPEDVPVKARPRQAELVAAS. Over residues 178-188 the composition is skewed to basic and acidic residues; it reads LPEKIPEDVPV.

It belongs to the SNF7 family. As to quaternary structure, probable core component of the endosomal sorting required for transport complex III (ESCRT-III). ESCRT-III components are thought to multimerize to form a flat lattice on the perimeter membrane of the endosome. Several assembly forms of ESCRT-III may exist that interact and act sequentially. Interacts with VPS4A; the interaction is direct. Interacts with VPS4B; the interaction is direct. Interacts with CHMP4A, CHMP4B and CHMP4C. Interacts with SNF8, VPS25 and VPS36. ISGylated in a CHMP5-dependent manner. Isgylation weakens its interaction with VPS4A.

It localises to the endomembrane system. Its subcellular location is the endosome membrane. The protein localises to the late endosome membrane. The protein resides in the membrane. Functionally, probable core component of the endosomal sorting required for transport complex III (ESCRT-III) which is involved in multivesicular bodies (MVBs) formation and sorting of endosomal cargo proteins into MVBs. MVBs contain intraluminal vesicles (ILVs) that are generated by invagination and scission from the limiting membrane of the endosome and mostly are delivered to lysosomes enabling degradation of membrane proteins, such as stimulated growth factor receptors, lysosomal enzymes and lipids. The MVB pathway appears to require the sequential function of ESCRT-O, -I,-II and -III complexes. ESCRT-III proteins mostly dissociate from the invaginating membrane before the ILV is released. The ESCRT machinery also functions in topologically equivalent membrane fission events, such as the terminal stages of cytokinesis and the budding of enveloped viruses (lentiviruses). ESCRT-III proteins are believed to mediate the necessary vesicle extrusion and/or membrane fission activities, possibly in conjunction with the AAA ATPase VPS4. In the ESCRT-III complex, it probably serves as an acceptor for the ESCRT-II complex on endosomal membrane. This is Charged multivesicular body protein 6 (CHMP6) from Pongo abelii (Sumatran orangutan).